The following is a 77-amino-acid chain: Small ribosomal subunit protein bS18 (77 aa).

The protein belongs to the bacterial ribosomal protein bS18 family. Part of the 30S ribosomal subunit. Forms a tight heterodimer with protein bS6.

In terms of biological role, binds as a heterodimer with protein bS6 to the central domain of the 16S rRNA, where it helps stabilize the platform of the 30S subunit. The chain is Small ribosomal subunit protein bS18 from Bacillus thuringiensis subsp. konkukian (strain 97-27).